We begin with the raw amino-acid sequence, 867 residues long: MKFMTSDEIREAYLSFFEKKGHKRLPSASLIPDDPQLMFTVAGMVPFKPIFWGKVDPVYPRVTTCQKCVRTNDIENVGRTPRHHTFFEMLGNFSFGDYFKQEAIEWAWEFVTKVLEMPEEKLWVSVYEYDDEAYEIWRKLGVPERKIVRMSKEDNFWGPAGPTGPCGPCSEIFYDTGVEVPVPEGQDPTPANTDGRYIEIWNLVFTEFYQDEEGNLHPLPRKNIDTGAGLERISAMMQGVYWNFDTDLFKPIIESIENVLKVSYKSDKVKDVSIRVIADHVRSVTFMIADGVLPSNEGRGYVLRRVLRRALRHGVLLGAKEPFLYKIVDSVVQKMGKIYPEIVEKQSFVENIVKSEELKFINNLSRGLEIVQKIVTTSGKISAEDAFKLYDTYGFPIDILRDIATENGYELDEKGFEKYLEEQRERSRKAQGEVEFAQKTGYENLGIETVFVGYDTLVSESSVLKIRVNGEFVEKAEGNDLECELILDITPFYAEKGGQVADTGVIKSQDGLFTVEYVYSPVEGIIVHRGKLNGKISVNEKVQSQVDEIKRKSTMRNHTATHILHSALRKVLGSHVRQAGSLVEPTRLRFDFTHYQALTKDEITKIENIVNEVILKAIPVVTEIKSYDEAVKEGAMALFEEKYGDFVRVVKVSDFSEELCGGTHVKNTGEIGLFKIVSESAVSAGVRRIEAITGLNSLEYLRTDEELFEKLKLLLEAPKSEIVEKIQKILEEKKNLEKEIQEIKRKLINPEEIAKKVKEYNNIKYVVSVLEDVEPDILKDLIDNISDRIKGIVLLISKMSDKIIVTVKVPKELTQDYNAGNIAKLVSKVLGGGGGGSPTFAQAGGKLIEKIDEATELFEKIIRKEVQ.

Zn(2+) is bound by residues His558, His562, Cys660, and His664.

Belongs to the class-II aminoacyl-tRNA synthetase family. It depends on Zn(2+) as a cofactor.

The protein localises to the cytoplasm. It carries out the reaction tRNA(Ala) + L-alanine + ATP = L-alanyl-tRNA(Ala) + AMP + diphosphate. In terms of biological role, catalyzes the attachment of alanine to tRNA(Ala) in a two-step reaction: alanine is first activated by ATP to form Ala-AMP and then transferred to the acceptor end of tRNA(Ala). Also edits incorrectly charged Ser-tRNA(Ala) and Gly-tRNA(Ala) via its editing domain. The sequence is that of Alanine--tRNA ligase from Fervidobacterium nodosum (strain ATCC 35602 / DSM 5306 / Rt17-B1).